The primary structure comprises 159 residues: Nucleotide-binding protein PSPA7_4966 (159 aa).

This sequence belongs to the YajQ family.

In terms of biological role, nucleotide-binding protein. This chain is Nucleotide-binding protein PSPA7_4966, found in Pseudomonas paraeruginosa (strain DSM 24068 / PA7) (Pseudomonas aeruginosa (strain PA7)).